The primary structure comprises 360 residues: D-alanine--D-alanine ligase (360 aa).

Residues 139 to 344 (KDVFAQAGLA…YPELIEKLVS (206 aa)) enclose the ATP-grasp domain. Position 172 to 227 (172 to 227 (EQVLGYPCFVKPANMGSSVGISKCRSKEELQTAFDLAFQYDRRVVVEEGVVGREIE)) interacts with ATP. Aspartate 298, glutamate 311, and asparagine 313 together coordinate Mg(2+).

The protein belongs to the D-alanine--D-alanine ligase family. Mg(2+) serves as cofactor. It depends on Mn(2+) as a cofactor.

The protein localises to the cytoplasm. It catalyses the reaction 2 D-alanine + ATP = D-alanyl-D-alanine + ADP + phosphate + H(+). It functions in the pathway cell wall biogenesis; peptidoglycan biosynthesis. Functionally, cell wall formation. This Bacillus pumilus (strain SAFR-032) protein is D-alanine--D-alanine ligase.